We begin with the raw amino-acid sequence, 440 residues long: Thymidine phosphorylase (440 aa).

Belongs to the thymidine/pyrimidine-nucleoside phosphorylase family. As to quaternary structure, homodimer.

The enzyme catalyses thymidine + phosphate = 2-deoxy-alpha-D-ribose 1-phosphate + thymine. It functions in the pathway pyrimidine metabolism; dTMP biosynthesis via salvage pathway; dTMP from thymine: step 1/2. Functionally, the enzymes which catalyze the reversible phosphorolysis of pyrimidine nucleosides are involved in the degradation of these compounds and in their utilization as carbon and energy sources, or in the rescue of pyrimidine bases for nucleotide synthesis. This Yersinia enterocolitica serotype O:8 / biotype 1B (strain NCTC 13174 / 8081) protein is Thymidine phosphorylase.